The chain runs to 890 residues: Leucine--tRNA ligase (890 aa).

The 'HIGH' region motif lies at proline 48 to histidine 58. The short motif at lysine 645–serine 649 is the 'KMSKS' region element. Lysine 648 is an ATP binding site.

The protein belongs to the class-I aminoacyl-tRNA synthetase family.

The protein localises to the cytoplasm. The enzyme catalyses tRNA(Leu) + L-leucine + ATP = L-leucyl-tRNA(Leu) + AMP + diphosphate. This chain is Leucine--tRNA ligase, found in Polynucleobacter necessarius subsp. necessarius (strain STIR1).